Consider the following 215-residue polypeptide: Probable maleylacetoacetate isomerase (215 aa).

The region spanning 2 to 85 is the GST N-terminal domain; the sequence is MSLILYGYWR…YLDETYPAPR (84 aa). One can recognise a GST C-terminal domain in the interval 90–215; it reads RGAERYQVKA…AAPENQPDAC (126 aa).

It belongs to the GST superfamily. Zeta family.

It carries out the reaction 4-maleylacetoacetate = 4-fumarylacetoacetate. It functions in the pathway amino-acid degradation; L-phenylalanine degradation; acetoacetate and fumarate from L-phenylalanine: step 5/6. This is Probable maleylacetoacetate isomerase (maiA) from Vibrio cholerae serotype O1 (strain ATCC 39315 / El Tor Inaba N16961).